A 290-amino-acid polypeptide reads, in one-letter code: 33 kDa chaperonin (290 aa).

2 disulfide bridges follow: cysteine 231–cysteine 233 and cysteine 264–cysteine 267.

Belongs to the HSP33 family. In terms of processing, under oxidizing conditions two disulfide bonds are formed involving the reactive cysteines. Under reducing conditions zinc is bound to the reactive cysteines and the protein is inactive.

It localises to the cytoplasm. In terms of biological role, redox regulated molecular chaperone. Protects both thermally unfolding and oxidatively damaged proteins from irreversible aggregation. Plays an important role in the bacterial defense system toward oxidative stress. This is 33 kDa chaperonin from Photorhabdus laumondii subsp. laumondii (strain DSM 15139 / CIP 105565 / TT01) (Photorhabdus luminescens subsp. laumondii).